Consider the following 331-residue polypeptide: Phenylalanine--tRNA ligase alpha subunit (331 aa).

E258 lines the Mg(2+) pocket.

This sequence belongs to the class-II aminoacyl-tRNA synthetase family. Phe-tRNA synthetase alpha subunit type 1 subfamily. In terms of assembly, tetramer of two alpha and two beta subunits. Mg(2+) serves as cofactor.

Its subcellular location is the cytoplasm. It carries out the reaction tRNA(Phe) + L-phenylalanine + ATP = L-phenylalanyl-tRNA(Phe) + AMP + diphosphate + H(+). This is Phenylalanine--tRNA ligase alpha subunit (pheS) from Synechocystis sp. (strain ATCC 27184 / PCC 6803 / Kazusa).